Consider the following 193-residue polypeptide: dTTP/UTP pyrophosphatase (193 aa).

D71 functions as the Proton acceptor in the catalytic mechanism.

The protein belongs to the Maf family. YhdE subfamily. The cofactor is a divalent metal cation.

Its subcellular location is the cytoplasm. The catalysed reaction is dTTP + H2O = dTMP + diphosphate + H(+). The enzyme catalyses UTP + H2O = UMP + diphosphate + H(+). In terms of biological role, nucleoside triphosphate pyrophosphatase that hydrolyzes dTTP and UTP. May have a dual role in cell division arrest and in preventing the incorporation of modified nucleotides into cellular nucleic acids. This chain is dTTP/UTP pyrophosphatase, found in Geobacter sp. (strain M21).